Here is a 583-residue protein sequence, read N- to C-terminus: Isocitrate dehydrogenase kinase/phosphatase (583 aa).

ATP-binding positions include 315–321 (APGIRGM) and K336. D371 is a catalytic residue.

This sequence belongs to the AceK family.

The protein resides in the cytoplasm. It carries out the reaction L-seryl-[isocitrate dehydrogenase] + ATP = O-phospho-L-seryl-[isocitrate dehydrogenase] + ADP + H(+). Bifunctional enzyme which can phosphorylate or dephosphorylate isocitrate dehydrogenase (IDH) on a specific serine residue. This is a regulatory mechanism which enables bacteria to bypass the Krebs cycle via the glyoxylate shunt in response to the source of carbon. When bacteria are grown on glucose, IDH is fully active and unphosphorylated, but when grown on acetate or ethanol, the activity of IDH declines drastically concomitant with its phosphorylation. The protein is Isocitrate dehydrogenase kinase/phosphatase of Salmonella heidelberg (strain SL476).